Here is a 205-residue protein sequence, read N- to C-terminus: Holliday junction branch migration complex subunit RuvA (205 aa).

The domain I stretch occupies residues 1 to 64; that stretch reads MIGRLRGVLI…EDAQLLYGFI (64 aa). The segment at 65-143 is domain II; it reads TKKERSLFRL…SLMEASVGSE (79 aa). Residues 144 to 156 form a flexible linker region; it reads REFVLQSNYSPAP. The domain III stretch occupies residues 157 to 205; sequence TVNSAEEDAISALLSLGYKPPQASKAVSAAYKEGMDSETLIKAALKSML.

The protein belongs to the RuvA family. As to quaternary structure, homotetramer. Forms an RuvA(8)-RuvB(12)-Holliday junction (HJ) complex. HJ DNA is sandwiched between 2 RuvA tetramers; dsDNA enters through RuvA and exits via RuvB. An RuvB hexamer assembles on each DNA strand where it exits the tetramer. Each RuvB hexamer is contacted by two RuvA subunits (via domain III) on 2 adjacent RuvB subunits; this complex drives branch migration. In the full resolvosome a probable DNA-RuvA(4)-RuvB(12)-RuvC(2) complex forms which resolves the HJ.

It is found in the cytoplasm. The RuvA-RuvB-RuvC complex processes Holliday junction (HJ) DNA during genetic recombination and DNA repair, while the RuvA-RuvB complex plays an important role in the rescue of blocked DNA replication forks via replication fork reversal (RFR). RuvA specifically binds to HJ cruciform DNA, conferring on it an open structure. The RuvB hexamer acts as an ATP-dependent pump, pulling dsDNA into and through the RuvAB complex. HJ branch migration allows RuvC to scan DNA until it finds its consensus sequence, where it cleaves and resolves the cruciform DNA. The chain is Holliday junction branch migration complex subunit RuvA from Shewanella sp. (strain MR-4).